The primary structure comprises 79 residues: Small ribosomal subunit protein uS11 (79 aa).

Phosphoserine is present on S14. Glycyl lysine isopeptide (Lys-Gly) (interchain with G-Cter in SUMO2) cross-links involve residues K59 and K61.

Belongs to the universal ribosomal protein uS11 family. Component of the small ribosomal subunit. Part of the small subunit (SSU) processome, composed of more than 70 proteins and the RNA chaperone small nucleolar RNA (snoRNA) U3.

The protein resides in the cytoplasm. The protein localises to the nucleus. Its subcellular location is the nucleolus. Component of the small ribosomal subunit. The ribosome is a large ribonucleoprotein complex responsible for the synthesis of proteins in the cell. Part of the small subunit (SSU) processome, first precursor of the small eukaryotic ribosomal subunit. During the assembly of the SSU processome in the nucleolus, many ribosome biogenesis factors, an RNA chaperone and ribosomal proteins associate with the nascent pre-rRNA and work in concert to generate RNA folding, modifications, rearrangements and cleavage as well as targeted degradation of pre-ribosomal RNA by the RNA exosome. The polypeptide is Small ribosomal subunit protein uS11 (RPS14) (Sus scrofa (Pig)).